The sequence spans 477 residues: Mitochondrial adenyl nucleotide antiporter SLC25A24 (477 aa).

The regulatory N-terminal domain stretch occupies residues 1 to 173 (MLRWLRGFVL…RFWKHSTGID (173 aa)). Residues 1–197 (MLRWLRGFVL…EKKSGQWWRQ (197 aa)) lie on the Mitochondrial intermembrane side of the membrane. EF-hand domains lie at 19-54 (EPPT…LGIP), 61-85 (EKIF…KYLK), 86-121 (DHEK…LGLT), and 122-157 (ISEQ…NPVT). Ca(2+) is bound by residues aspartate 32, asparagine 34, aspartate 36, valine 38, glutamate 43, aspartate 68, asparagine 70, aspartate 72, lysine 74, glutamate 79, aspartate 99, asparagine 101, aspartate 103, lysine 105, glutamate 110, aspartate 135, aspartate 137, threonine 139, threonine 141, and glutamate 146. Residues 159-168 (IEEIIRFWKH) form a linker region region. A C-terminal transmembrane transporter domain region spans residues 174–477 (IGDSLTIPDE…MKQTLGVTQK (304 aa)). 3 Solcar repeats span residues 192–278 (GQWW…YKKL), 286–371 (IGTF…LKSH), and 383–471 (PGVM…MKQT). Residues 198–215 (LLAGGVAGAVSRTSTAPL) form a helical membrane-spanning segment. At 216 to 252 (DRLKVMMQVHGSKSAKMNIYGGFQQMVKEGGIRSLWR) the chain is on the mitochondrial matrix side. Residues 253–272 (GNGTNVIKIAPETAVKFWAY) form a helical membrane-spanning segment. Over 273–295 (EQYKKLLTEEGQKIGTFERFVSG) the chain is Mitochondrial intermembrane. The helical transmembrane segment at 296–309 (SMAGATAQTFIYPM) threads the bilayer. Residues 310-345 (EVLKTRLAVGKTGQYSGMFDCAKKILKYEGMGAFYK) are Mitochondrial matrix-facing. Lysine 320 is subject to N6-acetyllysine; alternate. Lysine 320 carries the post-translational modification N6-succinyllysine; alternate. Position 336 is an N6-acetyllysine (lysine 336). The helical transmembrane segment at 346 to 365 (GYVPNLLGIIPYAGIDLAVY) threads the bilayer. Over 366–388 (ELLKSHWLDNFAKDSVNPGVMVL) the chain is Mitochondrial intermembrane. The helical transmembrane segment at 389–406 (LGCGALSSTCGQLASYPL) threads the bilayer. At 407–445 (ALVRTRMQAQAMIEKSPQLNMVGLFRRILSKEGLPGLYR) the chain is on the mitochondrial matrix side. Lysine 437 bears the N6-acetyllysine; alternate mark. N6-succinyllysine; alternate is present on lysine 437. Residues 446–465 (GITPNFMKVLPAVGISYVVY) traverse the membrane as a helical segment. Topologically, residues 466 to 477 (ENMKQTLGVTQK) are mitochondrial intermembrane.

The protein belongs to the mitochondrial carrier (TC 2.A.29) family. As to quaternary structure, monomer.

Its subcellular location is the mitochondrion inner membrane. It carries out the reaction Mg(2+)(out) + phosphate(in) + ATP(out) = Mg(2+)(in) + phosphate(out) + ATP(in). The enzyme catalyses ADP(out) + phosphate(in) + H(+)(out) = ADP(in) + phosphate(out) + H(+)(in). The catalysed reaction is AMP(out) + phosphate(in) = AMP(in) + phosphate(out). It catalyses the reaction phosphate(in) + ATP(out) + 2 H(+)(out) = phosphate(out) + ATP(in) + 2 H(+)(in). It carries out the reaction dADP(in) + ADP(out) = dADP(out) + ADP(in). The enzyme catalyses Mg(2+)(in) + ADP(out) + ATP(in) + H(+)(out) = Mg(2+)(out) + ADP(in) + ATP(out) + H(+)(in). The catalysed reaction is ADP(out) + diphosphate(in) = ADP(in) + diphosphate(out). It catalyses the reaction dAMP(in) + ADP(out) + H(+)(out) = dAMP(out) + ADP(in) + H(+)(in). It carries out the reaction 3'-AMP(in) + ADP(out) + H(+)(out) = 3'-AMP(out) + ADP(in) + H(+)(in). The enzyme catalyses dAMP(out) + phosphate(in) = dAMP(in) + phosphate(out). The catalysed reaction is 3'-AMP(out) + phosphate(in) = 3'-AMP(in) + phosphate(out). It catalyses the reaction dADP(out) + phosphate(in) + H(+)(out) = dADP(in) + phosphate(out) + H(+)(in). Its activity is regulated as follows. Activated by an increase in cytosolic calcium levels that induce a conformational change of the N-terminal regulatory domain, uncapping the channel and allowing transport. Inhibited by bathophenanthroline, mersalyl, p-hydroxymercuribenzoate, bromcresol purple and tannic acid. Functionally, electroneutral antiporter that mediates the transport of adenyl nucleotides through the inner mitochondrial membrane. Originally identified as an ATP-magnesium/inorganic phosphate antiporter, it also acts as a broad specificity adenyl nucleotide antiporter. By regulating the mitochondrial matrix adenyl nucleotide pool could adapt to changing cellular energetic demands and indirectly regulate adenyl nucleotide-dependent metabolic pathways. In vitro, a low activity is also observed with guanyl and pyrimidine nucleotides. May play a role in protecting cells against oxidative stress-induced cell death, by buffering calcium levels in the mitochondrial matrix through the formation of calcium-phosphate precipitates. In Bos taurus (Bovine), this protein is Mitochondrial adenyl nucleotide antiporter SLC25A24 (SLC25A24).